Here is a 632-residue protein sequence, read N- to C-terminus: 1,4-alpha-glucan branching enzyme GlgB (632 aa).

Asp310 acts as the Nucleophile in catalysis. Glu363 acts as the Proton donor in catalysis.

This sequence belongs to the glycosyl hydrolase 13 family. GlgB subfamily. Monomer.

It carries out the reaction Transfers a segment of a (1-&gt;4)-alpha-D-glucan chain to a primary hydroxy group in a similar glucan chain.. The protein operates within glycan biosynthesis; glycogen biosynthesis. Functionally, catalyzes the formation of the alpha-1,6-glucosidic linkages in glycogen by scission of a 1,4-alpha-linked oligosaccharide from growing alpha-1,4-glucan chains and the subsequent attachment of the oligosaccharide to the alpha-1,6 position. The sequence is that of 1,4-alpha-glucan branching enzyme GlgB from Desulfitobacterium hafniense (strain Y51).